The primary structure comprises 569 residues: MHKKNYMQQLSEQEQIRRDKLTAIRKAGINPYPADLFPVDHTTTGIKENFEEGKNVVIAGRLMSRRIQGKASFAELQDSKGRIQVYFNRDEICTGEDKSKYNDLYKKLLDIGDFIGIEGELFKTQVGEMTVMVKDFHLLSKALRPLPLPKTDKEGNTHDGFNDPEQRYRQRYADLAVNPKVKEIFVKRTKLFNAMRNFFNEREYFEVETPILQSIPGGAAARPFVTHHNALDIPLYLRIANELYLKRLIVGGFDGVYEFSKNFRNEGMDRTHNPEFTAMEIYVAYKDYNWMMEFTEQLLEHCAEAVNGTTDATFGEHKINFKAPYKRLSMTDAIIEYTGFDITGKSEKELYEAAKGMDIEVDDTMGKGKLIDEIFGEKCEGKFIQPTFITDYPKEMSPLCKEHRDNPELTERFELMVCGKEIANAYSELNDPLDQRERFEEQLKLSEKGDDEAMFIDNDFLRSLEYGMPPTSGLGIGMDRLIMFLTNKQSIQEVLFFPQMKPEKKAVELSEEEKEVFKLLKNDSVHELNDIKEQSGLSNKKWDKAVKGLRKHKMIDVFKEGETLNMKIS.

The Mg(2+) site is built by Glu-414 and Glu-421.

This sequence belongs to the class-II aminoacyl-tRNA synthetase family. As to quaternary structure, homodimer. The cofactor is Mg(2+).

The protein resides in the cytoplasm. The enzyme catalyses tRNA(Lys) + L-lysine + ATP = L-lysyl-tRNA(Lys) + AMP + diphosphate. This is Lysine--tRNA ligase from Christiangramia forsetii (strain DSM 17595 / CGMCC 1.15422 / KT0803) (Gramella forsetii).